A 313-amino-acid polypeptide reads, in one-letter code: Pantothenate synthetase (313 aa).

Residue 43–50 (MGALHEGH) participates in ATP binding. The active-site Proton donor is histidine 50. Glutamine 75 is a binding site for (R)-pantoate. Glutamine 75 contacts beta-alanine. 161 to 164 (GEKD) is an ATP binding site. A (R)-pantoate-binding site is contributed by glutamine 167. ATP contacts are provided by residues valine 190 and 198–201 (LSSR).

This sequence belongs to the pantothenate synthetase family. In terms of assembly, homodimer.

The protein resides in the cytoplasm. The enzyme catalyses (R)-pantoate + beta-alanine + ATP = (R)-pantothenate + AMP + diphosphate + H(+). It participates in cofactor biosynthesis; (R)-pantothenate biosynthesis; (R)-pantothenate from (R)-pantoate and beta-alanine: step 1/1. Catalyzes the condensation of pantoate with beta-alanine in an ATP-dependent reaction via a pantoyl-adenylate intermediate. This is Pantothenate synthetase from Mycobacterium sp. (strain JLS).